The sequence spans 434 residues: MTHNTDLNLPLFERAKALIPGGVNSPVRAFRAVGGTPRFITRAQGAYMWDANGQRFIDYIGSWGPMILGHGHPAVLEAVQKAALEGFSFGAPTEREVELAEEIIRHVPSMEMIRLVSSGTEAGMSAIRLARGATRRNKIIKFNGCYHGHADSLLVKAGSGLATFGHATSAGVPQEVVQHTLVLEYNDVAQLEEAFTLHGPDVACVIMEPIAGNMNFVRASVPFMRRARELCTQHGALLVIDEVMTGFRVALGGAQSLYAQAIPGFKPDITVLGKVIGGGMPLAAFGGSRAVMEQLAPLGPVYQAGTLSGNPVATACGLATLREIAKPGFYDALGARTRALIDGLAGAASAAGVPFCGDTQGGMFGFFLLPQLPQNYPEVLNTDGMRFNTLFHGLLDGGVYIAPALYEAGFVSAAHTEQDIADTVAVARDVFQKL.

Residue K274 is modified to N6-(pyridoxal phosphate)lysine.

This sequence belongs to the class-III pyridoxal-phosphate-dependent aminotransferase family. HemL subfamily. As to quaternary structure, homodimer. The cofactor is pyridoxal 5'-phosphate.

The protein resides in the cytoplasm. It catalyses the reaction (S)-4-amino-5-oxopentanoate = 5-aminolevulinate. Its pathway is porphyrin-containing compound metabolism; protoporphyrin-IX biosynthesis; 5-aminolevulinate from L-glutamyl-tRNA(Glu): step 2/2. This chain is Glutamate-1-semialdehyde 2,1-aminomutase, found in Acidovorax ebreus (strain TPSY) (Diaphorobacter sp. (strain TPSY)).